Consider the following 788-residue polypeptide: Endonuclease MutS2 (788 aa).

332-339 contributes to the ATP binding site; that stretch reads GPNTGGKT. Residues 713–788 enclose the Smr domain; sequence VDLRGMDAEE…GTGVTVVEIK (76 aa).

Belongs to the DNA mismatch repair MutS family. MutS2 subfamily. In terms of assembly, homodimer. Binds to stalled ribosomes, contacting rRNA.

In terms of biological role, endonuclease that is involved in the suppression of homologous recombination and thus may have a key role in the control of bacterial genetic diversity. Its function is as follows. Acts as a ribosome collision sensor, splitting the ribosome into its 2 subunits. Detects stalled/collided 70S ribosomes which it binds and splits by an ATP-hydrolysis driven conformational change. Acts upstream of the ribosome quality control system (RQC), a ribosome-associated complex that mediates the extraction of incompletely synthesized nascent chains from stalled ribosomes and their subsequent degradation. Probably generates substrates for RQC. The polypeptide is Endonuclease MutS2 (Clostridium botulinum (strain Loch Maree / Type A3)).